The primary structure comprises 494 residues: Glycerol kinase (494 aa).

T13 is an ADP binding site. ATP is bound by residues T13, T14, and S15. T13 is a binding site for sn-glycerol 3-phosphate. Position 17 (R17) interacts with ADP. Sn-glycerol 3-phosphate contacts are provided by R83, E84, Y135, and D244. Positions 83, 84, 135, 244, and 245 each coordinate glycerol. 2 residues coordinate ADP: T266 and G309. 4 residues coordinate ATP: T266, G309, Q313, and G410. G410 and N414 together coordinate ADP.

The protein belongs to the FGGY kinase family.

The enzyme catalyses glycerol + ATP = sn-glycerol 3-phosphate + ADP + H(+). The protein operates within polyol metabolism; glycerol degradation via glycerol kinase pathway; sn-glycerol 3-phosphate from glycerol: step 1/1. Inhibited by fructose 1,6-bisphosphate (FBP). Key enzyme in the regulation of glycerol uptake and metabolism. Catalyzes the phosphorylation of glycerol to yield sn-glycerol 3-phosphate. This is Glycerol kinase from Shewanella baltica (strain OS185).